The primary structure comprises 357 residues: Probable dual-specificity RNA methyltransferase RlmN (357 aa).

The active-site Proton acceptor is the Glu95. The 235-residue stretch at Asn106–Asp340 folds into the Radical SAM core domain. The cysteines at positions 113 and 345 are disulfide-linked. The [4Fe-4S] cluster site is built by Cys120, Cys124, and Cys127. Residues Gly172–Glu173, Ser204, Ser227–His229, and Asn302 contribute to the S-adenosyl-L-methionine site. Cys345 acts as the S-methylcysteine intermediate in catalysis.

It belongs to the radical SAM superfamily. RlmN family. [4Fe-4S] cluster is required as a cofactor.

Its subcellular location is the cytoplasm. The enzyme catalyses adenosine(2503) in 23S rRNA + 2 reduced [2Fe-2S]-[ferredoxin] + 2 S-adenosyl-L-methionine = 2-methyladenosine(2503) in 23S rRNA + 5'-deoxyadenosine + L-methionine + 2 oxidized [2Fe-2S]-[ferredoxin] + S-adenosyl-L-homocysteine. It catalyses the reaction adenosine(37) in tRNA + 2 reduced [2Fe-2S]-[ferredoxin] + 2 S-adenosyl-L-methionine = 2-methyladenosine(37) in tRNA + 5'-deoxyadenosine + L-methionine + 2 oxidized [2Fe-2S]-[ferredoxin] + S-adenosyl-L-homocysteine. Its function is as follows. Specifically methylates position 2 of adenine 2503 in 23S rRNA and position 2 of adenine 37 in tRNAs. The protein is Probable dual-specificity RNA methyltransferase RlmN of Desulfitobacterium hafniense (strain Y51).